Consider the following 455-residue polypeptide: Glutamyl-tRNA reductase (455 aa).

Residues 49–52 (TCNR), Ser109, 114–116 (EAQ), and Gln120 each bind substrate. Residue Cys50 is the Nucleophile of the active site. NADP(+) is bound at residue 190-195 (GAGAMG).

Belongs to the glutamyl-tRNA reductase family. In terms of assembly, homodimer.

It carries out the reaction (S)-4-amino-5-oxopentanoate + tRNA(Glu) + NADP(+) = L-glutamyl-tRNA(Glu) + NADPH + H(+). The protein operates within porphyrin-containing compound metabolism; protoporphyrin-IX biosynthesis; 5-aminolevulinate from L-glutamyl-tRNA(Glu): step 1/2. Its function is as follows. Catalyzes the NADPH-dependent reduction of glutamyl-tRNA(Glu) to glutamate 1-semialdehyde (GSA). The polypeptide is Glutamyl-tRNA reductase (Salinispora tropica (strain ATCC BAA-916 / DSM 44818 / JCM 13857 / NBRC 105044 / CNB-440)).